The following is a 264-amino-acid chain: Signal peptidase I (264 aa).

Over M1 to S18 the chain is Cytoplasmic. Residues F19–V39 form a helical membrane-spanning segment. Residues P40–E264 lie on the Periplasmic side of the membrane. Residues S43 and K106 contribute to the active site.

Belongs to the peptidase S26 family.

Its subcellular location is the cell inner membrane. The enzyme catalyses Cleavage of hydrophobic, N-terminal signal or leader sequences from secreted and periplasmic proteins.. Complements E.coli mutants temperature-sensitive for LepB function. The chain is Signal peptidase I (lepB) from Rickettsia typhi (strain ATCC VR-144 / Wilmington).